The following is a 436-amino-acid chain: UBX domain-containing protein 7 (436 aa).

Residue lysine 19 forms a Glycyl lysine isopeptide (Lys-Gly) (interchain with G-Cter in ubiquitin) linkage. The interval 115–141 (AGESSSRETNPGLAREEKSSRDVHRKN) is disordered. Residues 212 to 290 (LHSSKCVLQI…ELTPRSALLL (79 aa)) form the UBX domain. The segment covering 325–346 (DKDPEVTSQREETSKPNRHEVR) has biased composition (basic and acidic residues). Disordered regions lie at residues 325 to 357 (DKDP…AASS) and 371 to 436 (SSAH…EDKK). A compositionally biased stretch (low complexity) spans 347-357 (SSTPLSGAASS). Over residues 371–408 (SSAHASPMLTPSGTRYPSETNLTTSRSVSPNVFQFVNN) the composition is skewed to polar residues. At serine 388 the chain carries Phosphoserine. A compositionally biased stretch (basic and acidic residues) spans 426 to 436 (HLEKKKDEDKK).

Interacts with CDC48.

It is found in the endoplasmic reticulum. Its function is as follows. Involved in CDC48-dependent protein degradation through the ubiquitin/proteasome pathway. The polypeptide is UBX domain-containing protein 7 (UBX7) (Saccharomyces cerevisiae (strain ATCC 204508 / S288c) (Baker's yeast)).